The following is a 638-amino-acid chain: Chaperone protein DnaK (638 aa).

T198 is subject to Phosphothreonine; by autocatalysis. The interval 600–638 (KTQTEGGAQPGAEADGDTGAKGGEKVVDADFEEVKDDKK) is disordered. Acidic residues predominate over residues 628–638 (ADFEEVKDDKK).

This sequence belongs to the heat shock protein 70 family.

Functionally, acts as a chaperone. The sequence is that of Chaperone protein DnaK from Geobacter metallireducens (strain ATCC 53774 / DSM 7210 / GS-15).